Consider the following 436-residue polypeptide: GTPase Der (436 aa).

2 EngA-type G domains span residues 4-165 (NVIA…NFDS) and 172-347 (FKLS…ENLE). GTP is bound by residues 10–17 (GKPNVGKS), 57–61 (DTGGI), 119–122 (NKLD), 178–185 (GQPNSGKS), 225–229 (DTAGI), and 290–293 (NKWD). The 85-residue stretch at 348–432 (REIKPSVLTN…PINIIFKNKS (85 aa)) folds into the KH-like domain.

Belongs to the TRAFAC class TrmE-Era-EngA-EngB-Septin-like GTPase superfamily. EngA (Der) GTPase family. As to quaternary structure, associates with the 50S ribosomal subunit.

Functionally, GTPase that plays an essential role in the late steps of ribosome biogenesis. The polypeptide is GTPase Der (Mycoplasmopsis agalactiae (strain NCTC 10123 / CIP 59.7 / PG2) (Mycoplasma agalactiae)).